Consider the following 201-residue polypeptide: LexA repressor (201 aa).

The segment at residues Val29–Lys49 is a DNA-binding region (H-T-H motif). Active-site for autocatalytic cleavage activity residues include Ser125 and Lys162.

This sequence belongs to the peptidase S24 family. Homodimer.

The catalysed reaction is Hydrolysis of Ala-|-Gly bond in repressor LexA.. In terms of biological role, represses a number of genes involved in the response to DNA damage (SOS response), including recA and lexA. In the presence of single-stranded DNA, RecA interacts with LexA causing an autocatalytic cleavage which disrupts the DNA-binding part of LexA, leading to derepression of the SOS regulon and eventually DNA repair. In Clostridium botulinum (strain 657 / Type Ba4), this protein is LexA repressor.